The following is a 3567-amino-acid chain: Sushi, von Willebrand factor type A, EGF and pentraxin domain-containing protein 1 (3567 aa).

A signal peptide spans 1 to 17; sequence MWSRLAFCCWALALVSG. The VWFA domain maps to 84 to 265; the sequence is ELVFLVDESS…LARRALHEDL (182 aa). Asn187 carries an N-linked (GlcNAc...) asparagine glycan. Sushi domains follow at residues 377–436, 437–496, and 497–561; these read VHCP…FCRV, RTCP…RCVE, and RHCA…VCKD. Intrachain disulfides connect Cys379–Cys421, Cys407–Cys434, Cys439–Cys481, Cys467–Cys494, Cys499–Cys544, and Cys530–Cys559. HYR domains are found at residues 560–644 and 645–724; these read KDVE…KVID and VEPP…VIKG. One can recognise a Sushi 4 domain in the interval 725 to 789; sequence SPCEVPFTPV…YSTEWPDCAI (65 aa). Intrachain disulfides connect Cys727–Cys769, Cys753–Cys787, Cys1196–Cys1207, Cys1201–Cys1216, Cys1218–Cys1227, Cys1234–Cys1245, Cys1239–Cys1254, Cys1256–Cys1265, Cys1272–Cys1283, Cys1277–Cys1292, Cys1294–Cys1303, Cys1310–Cys1321, Cys1315–Cys1330, Cys1332–Cys1341, Cys1348–Cys1359, Cys1353–Cys1368, Cys1370–Cys1379, Cys1386–Cys1397, Cys1391–Cys1406, and Cys1408–Cys1417. Residues 1192 to 1228 form the EGF-like 1 domain; it reads VFHECFLNPCHNSGTCQQLGRGYVCLCPPGYTGLKCE. One can recognise an EGF-like 2; calcium-binding domain in the interval 1230-1266; sequence DIDECSSLPCLNGGICRDQVGGFTCECSLGYSGQICE. The region spanning 1268–1304 is the EGF-like 3; calcium-binding domain; the sequence is NINECISSPCLNKGTCTDGLASYRCTCVKGYMGVHCE. An EGF-like 4; calcium-binding domain is found at 1306–1342; sequence DVNECQSSPCLNNAVCKDQVGGFSCKCPPGFLGTRCE. Residues 1344-1380 form the EGF-like 5; calcium-binding domain; it reads NVDECLSQPCQNGATCKDGANSFRCQCPAGFTGTHCE. The region spanning 1382-1418 is the EGF-like 6; calcium-binding domain; it reads NINECQSNPCRNQATCVDELNSYSCKCQPGFSGHRCE. Residues 1423-1627 form the Pentraxin (PTX) domain; that stretch reads SGFNLDFEVS…VKVDSSSMFC (205 aa). 2 Sushi domains span residues 1628 to 1686 and 1687 to 1744; these read SDCP…HCER and IRCG…SCLD. 35 disulfides stabilise this stretch: Cys1630–Cys1671, Cys1657–Cys1684, Cys1689–Cys1729, Cys1715–Cys1742, Cys1748–Cys1760, Cys1754–Cys1769, Cys1771–Cys1782, Cys1788–Cys1828, Cys1814–Cys1841, Cys1846–Cys1886, Cys1872–Cys1899, Cys1904–Cys1944, Cys1930–Cys1957, Cys1962–Cys2002, Cys1988–Cys2015, Cys2020–Cys2060, Cys2046–Cys2077, Cys2082–Cys2125, Cys2111–Cys2140, Cys2145–Cys2185, Cys2171–Cys2198, Cys2203–Cys2244, Cys2230–Cys2258, Cys2263–Cys2303, Cys2289–Cys2317, Cys2322–Cys2362, Cys2348–Cys2375, Cys2380–Cys2421, Cys2407–Cys2434, Cys2439–Cys2479, Cys2465–Cys2492, Cys2497–Cys2537, Cys2523–Cys2550, Cys2555–Cys2595, and Cys2581–Cys2607. The EGF-like 7; calcium-binding domain maps to 1744–1783; that stretch reads DVDECAVGSDCSEHASCLNTNGSYVCSCNPPYTGDGKNCA. 14 Sushi domains span residues 1780-1843, 1844-1901, 1902-1959, 1960-2017, 2018-2079, 2080-2142, 2143-2200, 2201-2260, 2261-2319, 2320-2377, 2378-2436, 2437-2494, 2495-2552, and 2553-2609; these read KNCA…SCEA, ISCG…VCEL, VKCS…SCQL, VSCG…QCLA, VSCD…RCIA, HFCE…QCIP, VRCG…TCHP, VSCN…SCTP, LNCG…KCVP, TKCA…ICKM, VLCP…ECVP, VECP…MCKP, IECP…SCDA, and IHCS…TCVP. Positions 2638–2645 are important for the interaction with integrin ITGA9:ITGB1; that stretch reads DMMEVPYL. Sushi domains follow at residues 2660–2711, 2712–2769, 2770–2827, 2828–2885, 2886–2943, 2944–3001, 3002–3057, 3058–3115, 3116–3174, 3175–3234, 3235–3292, 3293–3350, 3351–3409, and 3410–3466; these read NTKE…SCIS, IECD…RCEA, ISCS…MCIP, VDCG…SCMP, VRCP…VCKP, ATCG…SCLP, CRCS…LCEH, AQCG…TCEP, LSCG…TCSP, KKCP…SCIP, VVCG…VCRE, NRCE…LCKP, NPCP…RCEK, and ISCG…VCRA. Disulfide bonds link Cys2682/Cys2709, Cys2714/Cys2754, Cys2740/Cys2767, Cys2772/Cys2812, Cys2798/Cys2825, Cys2830/Cys2870, Cys2856/Cys2883, Cys2888/Cys2928, Cys2914/Cys2941, Cys2946/Cys2986, Cys2972/Cys2999, Cys3004/Cys3043, Cys3029/Cys3055, Cys3060/Cys3100, Cys3086/Cys3113, Cys3118/Cys3159, Cys3144/Cys3172, Cys3177/Cys3217, Cys3203/Cys3232, Cys3237/Cys3277, Cys3263/Cys3290, Cys3295/Cys3335, Cys3321/Cys3348, Cys3353/Cys3394, Cys3380/Cys3407, Cys3412/Cys3452, Cys3438/Cys3464, Cys3500/Cys3510, Cys3504/Cys3516, Cys3518/Cys3527, Cys3532/Cys3542, Cys3536/Cys3548, and Cys3550/Cys3559. 2 consecutive EGF-like domains span residues 3496 to 3528 and 3529 to 3560; these read EEPICILPCLNGGRCVAPYQCDCPTGWTGSRCH and TATCQSPCLNGGKCIRPNRCHCLSAWTGHDCS.

As to quaternary structure, interacts (via Sushi domain 21) with ITGA9:ITGB1; thereby inhibits Ca(2+) intracellular signaling and as a result represses vasocontraction. Interacts (via Sushi domain 21) with ITGA4:ITGB1; thereby inhibits Ca(2+) intracellular signaling and as a result represses vasocontraction. Interacts with ANGPT1 and ANGPT2. Interacts with PEAR1 (via extracellular domain). Interacts with HSPG2, TLN1, FN1, COPA, CCT2, IQGAP1, LAMC1 and NID1. Interacts (via C-terminus) with TIE1. Expressed in the media layer of the arterial wall (at protein level). Highly expressed in lung and placenta, weakly expressed in the kidney, heart, brain and spleen. Also expressed in bone and periosteum, but not in cartilage and skeletal muscle.

It is found in the secreted. It localises to the nucleus. The protein resides in the cytoplasm. Its subcellular location is the membrane. Its function is as follows. Required for morphological development, cell alignment and migration of lymphatic endothelial cells during embryonic development, potentially via modulation of ANGPT2-TIE1 signaling and subsequent activation of FOXC2 transcription. Required for embryonic lymphatic vascular development, via mediating the correct formation of the first lymphovenous contact site and tight association of the lymphatic endothelium with the venous endothelium. Represses PRKCA-mediated L-type voltage-gated channel Ca(2+) influx and ROCK-mediated calcium sensitivity in vascular smooth muscle cells, via its interaction with integrins, thereby inhibiting vasocontraction. Promotes platelet activation, via its interaction with PEAR1 and subsequent activation of AKT/mTOR signaling. Plays a role in epidermal development and keratinocyte differentiation, independent of cell-cell adhesion. May play a role in initial cell attachment of stromal osteogenic cells. May promote myoblast cell adhesion when in the presence of integrin ITGA9:ITGB1. The polypeptide is Sushi, von Willebrand factor type A, EGF and pentraxin domain-containing protein 1 (Svep1) (Mus musculus (Mouse)).